The following is a 349-amino-acid chain: Putative F-box/kelch-repeat protein At4g02310 (349 aa).

An F-box domain is found at 11 to 58 (SLFSLLPNDIVLNILARVPRWYHPILSCVSKNLRFLVSSSELKITRSL). One copy of the Kelch repeat lies at 154–204 (KIYVFGGIDDMNKRYYEGIHAQVFDLKTQTWHVGPNLSVKLACLNRSVVTP).

The chain is Putative F-box/kelch-repeat protein At4g02310 from Arabidopsis thaliana (Mouse-ear cress).